Here is a 290-residue protein sequence, read N- to C-terminus: Probable 2-(5''-triphosphoribosyl)-3'-dephosphocoenzyme-A synthase (290 aa).

It belongs to the CitG/MdcB family.

It carries out the reaction 3'-dephospho-CoA + ATP = 2'-(5''-triphospho-alpha-D-ribosyl)-3'-dephospho-CoA + adenine. Functionally, involved in the formation of 2-(5''-phosphoribosyl)-3'-dephosphocoenzyme-A, the prosthetic group of the acyl-carrier protein of the malonate decarboxylase. The protein is Probable 2-(5''-triphosphoribosyl)-3'-dephosphocoenzyme-A synthase of Stutzerimonas stutzeri (strain A1501) (Pseudomonas stutzeri).